We begin with the raw amino-acid sequence, 472 residues long: Tryptophanase (472 aa).

Lys-270 bears the N6-(pyridoxal phosphate)lysine mark.

It belongs to the beta-eliminating lyase family. As to quaternary structure, homotetramer. Requires pyridoxal 5'-phosphate as cofactor.

It carries out the reaction L-tryptophan + H2O = indole + pyruvate + NH4(+). It functions in the pathway amino-acid degradation; L-tryptophan degradation via pyruvate pathway; indole and pyruvate from L-tryptophan: step 1/1. This is Tryptophanase (tnaA) from Vibrio cholerae serotype O1 (strain ATCC 39315 / El Tor Inaba N16961).